The sequence spans 311 residues: Probable deoxyhypusine synthase (311 aa).

Lys-284 (nucleophile) is an active-site residue.

This sequence belongs to the deoxyhypusine synthase family. NAD(+) serves as cofactor.

It catalyses the reaction [eIF5A protein]-L-lysine + spermidine = [eIF5A protein]-deoxyhypusine + propane-1,3-diamine. It functions in the pathway protein modification; eIF5A hypusination. Its function is as follows. Catalyzes the NAD-dependent oxidative cleavage of spermidine and the subsequent transfer of the butylamine moiety of spermidine to the epsilon-amino group of a specific lysine residue of the eIF-5A precursor protein to form the intermediate deoxyhypusine residue. In Picrophilus torridus (strain ATCC 700027 / DSM 9790 / JCM 10055 / NBRC 100828 / KAW 2/3), this protein is Probable deoxyhypusine synthase.